The chain runs to 227 residues: Guanylate kinase (227 aa).

The 179-residue stretch at 21–199 folds into the Guanylate kinase-like domain; sequence GNLFMVVAPS…ALAELECIVA (179 aa). 28–35 provides a ligand contact to ATP; that stretch reads APSGAGKS.

This sequence belongs to the guanylate kinase family.

It localises to the cytoplasm. It catalyses the reaction GMP + ATP = GDP + ADP. Essential for recycling GMP and indirectly, cGMP. The chain is Guanylate kinase from Burkholderia thailandensis (strain ATCC 700388 / DSM 13276 / CCUG 48851 / CIP 106301 / E264).